The primary structure comprises 444 residues: E3 ubiquitin-protein ligase RNFT2 (444 aa).

Residues 1-181 are Extracellular-facing; the sequence is MWLFTVNQVL…ILLAKLCFQH (181 aa). Disordered regions lie at residues 13–41 and 92–149; these read MQRR…ASVD and PASR…PGTP. The segment covering 107–121 has biased composition (basic residues); it reads YHHRQPHHHFHHGGH. The span at 131 to 140 shows a compositional bias: basic and acidic residues; that stretch reads GGDHRGHSEE. Residues 182–202 traverse the membrane as a helical segment; that stretch reads KLGIAVCIGMASTFAYANSTL. At 203-214 the chain is on the cytoplasmic side; the sequence is REQVSLKEKRSV. The helical transmembrane segment at 215 to 235 threads the bilayer; the sequence is LVILWILAFLAGNTLYVLYTF. Residues 236–255 are Extracellular-facing; sequence SSQQLYNSLIFLKPNLEMLD. The chain crosses the membrane as a helical span at residues 256-276; that stretch reads FFDLLWIVGIADFVLKYITIA. Residues 277 to 329 are Cytoplasmic-facing; it reads LKCLIVALPKIILAVKSKGKFYLVIEELSQLFRSLVPIQLWYKYIMGDDSSNS. The helical transmembrane segment at 330-350 threads the bilayer; sequence YFLGGVLIVLYSLCKSFDICG. Residues 351–444 lie on the Extracellular side of the membrane; sequence RVGGVRKALK…GATSAHFQVY (94 aa). The RING-type zinc-finger motif lies at 384–422; it reads CAICQAEFREPLILLCQHVFCEECLCLWLDRERTCPLCR.

The protein resides in the membrane. Functionally, E3 ubiquitin-protein ligase that negatively regulates IL3-dependent cellular responses through IL3RA ubiquitination and degradation by the proteasome, having an anti-inflammatory effect. The sequence is that of E3 ubiquitin-protein ligase RNFT2 from Homo sapiens (Human).